The following is a 118-amino-acid chain: Large ribosomal subunit protein uL18 (118 aa).

The protein belongs to the universal ribosomal protein uL18 family. As to quaternary structure, part of the 50S ribosomal subunit; part of the 5S rRNA/L5/L18/L25 subcomplex. Contacts the 5S and 23S rRNAs.

Functionally, this is one of the proteins that bind and probably mediate the attachment of the 5S RNA into the large ribosomal subunit, where it forms part of the central protuberance. The chain is Large ribosomal subunit protein uL18 from Levilactobacillus brevis (strain ATCC 367 / BCRC 12310 / CIP 105137 / JCM 1170 / LMG 11437 / NCIMB 947 / NCTC 947) (Lactobacillus brevis).